The chain runs to 323 residues: tRNA-modifying protein YgfZ (323 aa).

Folate is bound by residues W29 and W182.

This sequence belongs to the tRNA-modifying YgfZ family.

It is found in the cytoplasm. Its function is as follows. Folate-binding protein involved in regulating the level of ATP-DnaA and in the modification of some tRNAs. It is probably a key factor in regulatory networks that act via tRNA modification, such as initiation of chromosomal replication. The sequence is that of tRNA-modifying protein YgfZ from Vibrio atlanticus (strain LGP32) (Vibrio splendidus (strain Mel32)).